A 185-amino-acid polypeptide reads, in one-letter code: Large ribosomal subunit protein uL5 (185 aa).

The protein belongs to the universal ribosomal protein uL5 family. As to quaternary structure, part of the 50S ribosomal subunit; part of the 5S rRNA/L5/L18/L25 subcomplex. Contacts the 5S rRNA and the P site tRNA. Forms a bridge to the 30S subunit in the 70S ribosome.

Functionally, this is one of the proteins that bind and probably mediate the attachment of the 5S RNA into the large ribosomal subunit, where it forms part of the central protuberance. In the 70S ribosome it contacts protein S13 of the 30S subunit (bridge B1b), connecting the 2 subunits; this bridge is implicated in subunit movement. Contacts the P site tRNA; the 5S rRNA and some of its associated proteins might help stabilize positioning of ribosome-bound tRNAs. The chain is Large ribosomal subunit protein uL5 from Xanthobacter autotrophicus (strain ATCC BAA-1158 / Py2).